The chain runs to 368 residues: Leu/Ile/Val-binding protein homolog 3 (368 aa).

A signal peptide spans 1 to 23 (MNLKLLSSVAFAATIGFASAAYA).

The protein belongs to the leucine-binding protein family.

In terms of biological role, component of an amino-acid transport system. The sequence is that of Leu/Ile/Val-binding protein homolog 3 from Brucella melitensis biotype 1 (strain ATCC 23456 / CCUG 17765 / NCTC 10094 / 16M).